Here is a 284-residue protein sequence, read N- to C-terminus: Acetyl-coenzyme A carboxylase carboxyl transferase subunit beta (284 aa).

A CoA carboxyltransferase N-terminal domain is found at G24 to R284.

It belongs to the AccD/PCCB family. Acetyl-CoA carboxylase is a heterohexamer composed of biotin carboxyl carrier protein (AccB), biotin carboxylase (AccC) and two subunits each of ACCase subunit alpha (AccA) and ACCase subunit beta (AccD).

The protein localises to the cytoplasm. The catalysed reaction is N(6)-carboxybiotinyl-L-lysyl-[protein] + acetyl-CoA = N(6)-biotinyl-L-lysyl-[protein] + malonyl-CoA. It participates in lipid metabolism; malonyl-CoA biosynthesis; malonyl-CoA from acetyl-CoA: step 1/1. In terms of biological role, component of the acetyl coenzyme A carboxylase (ACC) complex. Biotin carboxylase (BC) catalyzes the carboxylation of biotin on its carrier protein (BCCP) and then the CO(2) group is transferred by the transcarboxylase to acetyl-CoA to form malonyl-CoA. The chain is Acetyl-coenzyme A carboxylase carboxyl transferase subunit beta from Flavobacterium psychrophilum (strain ATCC 49511 / DSM 21280 / CIP 103535 / JIP02/86).